Here is a 114-residue protein sequence, read N- to C-terminus: Putative movement protein (114 aa).

Residues 27-47 (LIGIILLVTVCLIVLWVCIML) traverse the membrane as a helical segment. The interval 79-114 (RTPFEATGPERERNWDARRQSTTVNPASQPNTGSVF) is disordered. Positions 86–97 (GPERERNWDARR) are enriched in basic and acidic residues. The span at 98–114 (QSTTVNPASQPNTGSVF) shows a compositional bias: polar residues.

This sequence belongs to the nanovirus movement protein family.

The protein resides in the host cell membrane. Its function is as follows. May transport viral genome to neighboring plant cells directly through plasmosdesmata, without any budding. The movement protein allows efficient cell to cell propagation, by bypassing the host cell wall barrier. The chain is Putative movement protein (DNA-M) from Faba bean necrotic yellows virus (isolate Syrian SV292-88) (FBNYV).